Here is a 635-residue protein sequence, read N- to C-terminus: Probable monoacyl phosphatidylinositol tetramannoside-binding protein LpqW (635 aa).

An N-terminal signal peptide occupies residues 1–26 (MGVPSPVRRVCVTVGALVALACMVLA). 3 disordered regions span residues 32–52 (PPPA…PRRP), 389–412 (NTSV…GPPE), and 511–551 (NAPT…LVKA). Composition is skewed to low complexity over residues 390–411 (TSVS…TGPP) and 511–531 (NAPT…APDT).

Belongs to the bacterial solute-binding protein 5 family.

Its pathway is phospholipid metabolism; phosphatidylinositol metabolism. Its function is as follows. May directly or indirectly regulate the accessibility of the key branch point intermediate, monoacyl phosphatidylinositol tetramannoside (AcPIM4), to the elongating alpha-1,6 mannosyltransferases which could regulate the lipoarabinomannans (LAMs) biosynthesis. The protein is Probable monoacyl phosphatidylinositol tetramannoside-binding protein LpqW (lpqW) of Mycobacterium tuberculosis (strain CDC 1551 / Oshkosh).